The primary structure comprises 173 residues: Probable lipoprotein EnvE (173 aa).

The signal sequence occupies residues 1-20 (MTLLSGKTTLVLCLSSILCG). Cys-21 carries N-palmitoyl cysteine lipidation. Cys-21 carries the S-diacylglycerol cysteine lipid modification.

The protein localises to the cell membrane. In Salmonella typhimurium (strain LT2 / SGSC1412 / ATCC 700720), this protein is Probable lipoprotein EnvE (envE).